We begin with the raw amino-acid sequence, 311 residues long: Apolipoprotein E (311 aa).

The first 18 residues, 1–18 (MKALWAVLLVTLLTGCLA), serve as a signal peptide directing secretion. 8 repeat units span residues 72–93 (ALME…EQLG), 94–115 (PVAE…ARLG), 116–137 (ADME…TMLG), 138–159 (QSTE…KRLM), 160–181 (RDAE…EGAE), 182–203 (RGVS…QRTA), 204–225 (NLGA…DRIR), and 226–247 (GRLE…EHME). Residues 72–247 (ALMEDTMTEV…RLEEVREHME (176 aa)) form an 8 X 22 AA approximate tandem repeats region. The residue at position 135 (Met135) is a Methionine sulfoxide. Phosphoserine is present on Ser139. Residues 150 to 160 (HLRKMRKRLMR) are LDL and other lipoprotein receptors binding. Residue 154 to 157 (MRKR) participates in heparin binding. The tract at residues 202–282 (TANLGAGAAQ…GWFEPIVEDM (81 aa)) is lipid-binding and lipoprotein association. 221–228 (GDRIRGRL) provides a ligand contact to heparin. The homooligomerization stretch occupies residues 258-311 (QQIRLQAEIFQARLKGWFEPIVEDMHRQWANLMEKIQASVATNPIITPVAQENQ). Residues 270-282 (RLKGWFEPIVEDM) are specificity for association with VLDL.

Belongs to the apolipoprotein A1/A4/E family. As to quaternary structure, homotetramer. May interact with ABCA1; functionally associated with ABCA1 in the biogenesis of HDLs. May interact with APP/A4 amyloid-beta peptide; the interaction is extremely stable in vitro but its physiological significance is unclear. May interact with MAPT. May interact with MAP2. In the cerebrospinal fluid, interacts with secreted SORL1. Interacts with PMEL; this allows the loading of PMEL luminal fragment on ILVs to induce fibril nucleation. APOE exists as multiple glycosylated and sialylated glycoforms within cells and in plasma. The extent of glycosylation and sialylation are tissue and context specific. In terms of processing, glycated in plasma VLDL. Post-translationally, phosphorylated by FAM20C in the extracellular medium.

Its subcellular location is the secreted. It localises to the extracellular space. The protein localises to the extracellular matrix. The protein resides in the extracellular vesicle. It is found in the endosome. Its subcellular location is the multivesicular body. In terms of biological role, APOE is an apolipoprotein, a protein associating with lipid particles, that mainly functions in lipoprotein-mediated lipid transport between organs via the plasma and interstitial fluids. APOE is a core component of plasma lipoproteins and is involved in their production, conversion and clearance. Apolipoproteins are amphipathic molecules that interact both with lipids of the lipoprotein particle core and the aqueous environment of the plasma. As such, APOE associates with chylomicrons, chylomicron remnants, very low density lipoproteins (VLDL) and intermediate density lipoproteins (IDL) but shows a preferential binding to high-density lipoproteins (HDL). It also binds a wide range of cellular receptors including the LDL receptor/LDLR and the very low-density lipoprotein receptor/VLDLR that mediate the cellular uptake of the APOE-containing lipoprotein particles. Finally, APOE also has a heparin-binding activity and binds heparan-sulfate proteoglycans on the surface of cells, a property that supports the capture and the receptor-mediated uptake of APOE-containing lipoproteins by cells. The polypeptide is Apolipoprotein E (Apoe) (Mus musculus (Mouse)).